We begin with the raw amino-acid sequence, 212 residues long: Outer-membrane lipoprotein carrier protein (212 aa).

A signal peptide spans 1 to 25 (MRKRILVSACAALAVFAAHMPTALA).

The protein belongs to the LolA family. As to quaternary structure, monomer.

It localises to the periplasm. In terms of biological role, participates in the translocation of lipoproteins from the inner membrane to the outer membrane. Only forms a complex with a lipoprotein if the residue after the N-terminal Cys is not an aspartate (The Asp acts as a targeting signal to indicate that the lipoprotein should stay in the inner membrane). This is Outer-membrane lipoprotein carrier protein from Cupriavidus pinatubonensis (strain JMP 134 / LMG 1197) (Cupriavidus necator (strain JMP 134)).